Reading from the N-terminus, the 619-residue chain is Secretogranin-2 (619 aa).

The N-terminal stretch at methionine 1–phenylalanine 30 is a signal peptide. At tyrosine 153 the chain carries Sulfotyrosine. 2 positions are modified to phosphoserine: serine 176 and serine 270. The segment at valine 247–glutamate 307 is disordered. 2 stretches are compositionally biased toward basic and acidic residues: residues methionine 255–arginine 286 and glutamate 295–glutamate 307. Residues serine 434, serine 534, serine 557, and serine 558 each carry the phosphoserine modification.

The protein belongs to the chromogranin/secretogranin protein family. As to quaternary structure, interacts with Secretogranin III/SCG3. Brain. Expression in the pituitary is restricted to the anterior lobe. Expression in the hypothalamus is observed in the neuronal cells and neurons of arcuate nucleus, supraoptic nucleus and median eminence (at protein level).

It localises to the secreted. Its function is as follows. Neuroendocrine protein of the granin family that regulates the biogenesis of secretory granules. The sequence is that of Secretogranin-2 (Scg2) from Rattus norvegicus (Rat).